A 229-amino-acid chain; its full sequence is Potassium/proton antiporter CemA (229 aa).

A run of 4 helical transmembrane segments spans residues 11-31, 118-138, 158-178, and 190-210; these read TTPF…SLFF, IISF…LVIL, LLAL…ELLI, and LLVC…TFNY.

Belongs to the CemA family.

It is found in the plastid. The protein resides in the chloroplast inner membrane. The enzyme catalyses K(+)(in) + H(+)(out) = K(+)(out) + H(+)(in). In terms of biological role, contributes to K(+)/H(+) antiport activity by supporting proton efflux to control proton extrusion and homeostasis in chloroplasts in a light-dependent manner to modulate photosynthesis. Prevents excessive induction of non-photochemical quenching (NPQ) under continuous-light conditions. Indirectly promotes efficient inorganic carbon uptake into chloroplasts. The protein is Potassium/proton antiporter CemA of Pelargonium hortorum (Common geranium).